The following is a 546-amino-acid chain: Phosphoglucomutase (546 aa).

Ser-135 functions as the Phosphoserine intermediate in the catalytic mechanism. Ser-135, Asp-288, Asp-290, and Asp-292 together coordinate Mg(2+).

This sequence belongs to the phosphohexose mutase family. Mg(2+) is required as a cofactor.

It carries out the reaction alpha-D-glucose 1-phosphate = alpha-D-glucose 6-phosphate. The protein operates within glycolipid metabolism; diglucosyl-diacylglycerol biosynthesis. In terms of biological role, catalyzes the interconversion between glucose-6-phosphate and alpha-glucose-1-phosphate. This is the first step in the biosynthesis of diglucosyl-diacylglycerol (Glc2-DAG), i.e. a glycolipid found in the membrane, which is also used as a membrane anchor for lipoteichoic acid (LTA). This Staphylococcus epidermidis (strain ATCC 35984 / DSM 28319 / BCRC 17069 / CCUG 31568 / BM 3577 / RP62A) protein is Phosphoglucomutase (pgcA).